A 490-amino-acid polypeptide reads, in one-letter code: ATP synthase subunit beta, chloroplastic (490 aa).

An ATP-binding site is contributed by 170-177; sequence GGXGVGKT.

The protein belongs to the ATPase alpha/beta chains family. In terms of assembly, F-type ATPases have 2 components, CF(1) - the catalytic core - and CF(0) - the membrane proton channel. CF(1) has five subunits: alpha(3), beta(3), gamma(1), delta(1), epsilon(1). CF(0) has four main subunits: a(1), b(1), b'(1) and c(9-12).

The protein resides in the plastid. It localises to the chloroplast thylakoid membrane. The enzyme catalyses ATP + H2O + 4 H(+)(in) = ADP + phosphate + 5 H(+)(out). In terms of biological role, produces ATP from ADP in the presence of a proton gradient across the membrane. The catalytic sites are hosted primarily by the beta subunits. The chain is ATP synthase subunit beta, chloroplastic from Ipomoea coccinea (Scarlet morning-glory).